We begin with the raw amino-acid sequence, 147 residues long: Large ribosomal subunit protein uL13 (147 aa).

The protein belongs to the universal ribosomal protein uL13 family. Part of the 50S ribosomal subunit.

This protein is one of the early assembly proteins of the 50S ribosomal subunit, although it is not seen to bind rRNA by itself. It is important during the early stages of 50S assembly. The protein is Large ribosomal subunit protein uL13 of Nocardia farcinica (strain IFM 10152).